Reading from the N-terminus, the 774-residue chain is Beta-D-xylosidase 1 (774 aa).

The signal sequence occupies residues 1-30; that stretch reads MSCYNKALLIGNKVVVILVFLLCLVHSSES. Residue Asn-131 is glycosylated (N-linked (GlcNAc...) asparagine). Asp-296 is an active-site residue. N-linked (GlcNAc...) asparagine glycosylation occurs at Asn-658.

The protein belongs to the glycosyl hydrolase 3 family. Expressed in leaves, stems, seedlings, roots, inflorescences, siliques and developing seeds. Expressed in the vasculature of the roots, leaves, flowers and silique. Expressed in tissues undergoing secondary cell wall thickening such as protoxylem, metaxylem, intrafascicular cambium and fibers.

The protein resides in the secreted. Its subcellular location is the extracellular space. It is found in the extracellular matrix. The catalysed reaction is Hydrolysis of terminal non-reducing alpha-L-arabinofuranoside residues in alpha-L-arabinosides.. Involved in pectic arabinan modification in mucilage secretory cells. Also acts as a beta-D-xylosidase during the remodeling of xylans in vascular development. The protein is Beta-D-xylosidase 1 (BXL1) of Arabidopsis thaliana (Mouse-ear cress).